We begin with the raw amino-acid sequence, 319 residues long: 2-oxoglutarate and iron-dependent oxygenase domain-containing protein 3 (319 aa).

Positions 1 to 34 (MAPQRRAATKAPEGNGAAERRNRSSTKKDRAPRE) are disordered. At 1–42 (MAPQRRAATKAPEGNGAAERRNRSSTKKDRAPREVQRLWQRP) the chain is on the cytoplasmic side. Basic and acidic residues predominate over residues 18–34 (AERRNRSSTKKDRAPRE). A helical; Signal-anchor for type II membrane protein membrane pass occupies residues 43–65 (WLRTAGLGAGFVLTALLLWSSLG). Residues 66-319 (ADDGVAEVLA…DHGIEDPAFP (254 aa)) lie on the Lumenal side of the membrane. Residues 207-309 (KPTFFSRINS…AITIAFSCNP (103 aa)) form the Fe2OG dioxygenase domain. An N-linked (GlcNAc...) asparagine glycan is attached at Asn215. Residues His230, Asp232, and His288 each coordinate Fe cation. Arg298 is a catalytic residue. Arg298 is a 2-oxoglutarate binding site.

Belongs to the OGFOD3 family. Requires Fe(2+) as cofactor. The cofactor is L-ascorbate.

Its subcellular location is the membrane. The polypeptide is 2-oxoglutarate and iron-dependent oxygenase domain-containing protein 3 (OGFOD3) (Homo sapiens (Human)).